The following is a 309-amino-acid chain: Homoserine O-succinyltransferase (309 aa).

Cysteine 142 functions as the Acyl-thioester intermediate in the catalytic mechanism. Residues lysine 163 and serine 192 each contribute to the substrate site. The Proton acceptor role is filled by histidine 235. Glutamate 237 is a catalytic residue. Arginine 249 contacts substrate.

Belongs to the MetA family.

The protein localises to the cytoplasm. The catalysed reaction is L-homoserine + succinyl-CoA = O-succinyl-L-homoserine + CoA. It functions in the pathway amino-acid biosynthesis; L-methionine biosynthesis via de novo pathway; O-succinyl-L-homoserine from L-homoserine: step 1/1. Transfers a succinyl group from succinyl-CoA to L-homoserine, forming succinyl-L-homoserine. The sequence is that of Homoserine O-succinyltransferase from Pectobacterium carotovorum subsp. carotovorum (strain PC1).